Here is a 143-residue protein sequence, read N- to C-terminus: MGKPAGLNAARKLRNHRREERWADAHYKKRLLGTAYKSSPFGGSSHAKGIVVEKIGVEAKQPNSAIRKCVRVQLIKNGKKVTAFVPHDGCLNFVDENDEVLLSGFGRKGKAKGDIPGVRFKVVKVAGVGLSALFHEKKEKPRA.

Pro62 carries the 3,4-dihydroxyproline modification.

This sequence belongs to the universal ribosomal protein uS12 family. As to quaternary structure, component of the small ribosomal subunit (SSU). Mature yeast ribosomes consist of a small (40S) and a large (60S) subunit. The 40S small subunit contains 1 molecule of ribosomal RNA (18S rRNA) and at least 33 different proteins. The large 60S subunit contains 3 rRNA molecules (25S, 5.8S and 5S rRNA) and at least 46 different proteins. Post-translationally, hydroxylation at Pro-62 affects translation termination efficiency.

It is found in the cytoplasm. The protein resides in the nucleus. It localises to the nucleolus. In terms of biological role, component of the ribosome, a large ribonucleoprotein complex responsible for the synthesis of proteins in the cell. The small ribosomal subunit (SSU) binds messenger RNAs (mRNAs) and translates the encoded message by selecting cognate aminoacyl-transfer RNA (tRNA) molecules. The large subunit (LSU) contains the ribosomal catalytic site termed the peptidyl transferase center (PTC), which catalyzes the formation of peptide bonds, thereby polymerizing the amino acids delivered by tRNAs into a polypeptide chain. The nascent polypeptides leave the ribosome through a tunnel in the LSU and interact with protein factors that function in enzymatic processing, targeting, and the membrane insertion of nascent chains at the exit of the ribosomal tunnel. This Schizosaccharomyces pombe (strain 972 / ATCC 24843) (Fission yeast) protein is Small ribosomal subunit protein uS12B (rps2302).